We begin with the raw amino-acid sequence, 562 residues long: NAD-dependent malic enzyme (562 aa).

Tyr101 functions as the Proton donor in the catalytic mechanism. Arg154 serves as a coordination point for NAD(+). The Proton acceptor role is filled by Lys172. A divalent metal cation is bound by residues Glu243, Asp244, and Asp267. NAD(+) contacts are provided by Asp267 and Asn415.

It belongs to the malic enzymes family. As to quaternary structure, homotetramer. The cofactor is Mg(2+). It depends on Mn(2+) as a cofactor.

The catalysed reaction is (S)-malate + NAD(+) = pyruvate + CO2 + NADH. It carries out the reaction oxaloacetate + H(+) = pyruvate + CO2. The chain is NAD-dependent malic enzyme from Vibrio parahaemolyticus serotype O3:K6 (strain RIMD 2210633).